The sequence spans 119 residues: Flagellar transcriptional regulator FlhD (119 aa).

This sequence belongs to the FlhD family. As to quaternary structure, homodimer; disulfide-linked. Forms a heterohexamer composed of two FlhC and four FlhD subunits. Each FlhC binds a FlhD dimer, forming a heterotrimer, and a hexamer assembles by dimerization of two heterotrimers.

It is found in the cytoplasm. In terms of biological role, functions in complex with FlhC as a master transcriptional regulator that regulates transcription of several flagellar and non-flagellar operons by binding to their promoter region. Activates expression of class 2 flagellar genes, including fliA, which is a flagellum-specific sigma factor that turns on the class 3 genes. Also regulates genes whose products function in a variety of physiological pathways. The polypeptide is Flagellar transcriptional regulator FlhD (Escherichia fergusonii (strain ATCC 35469 / DSM 13698 / CCUG 18766 / IAM 14443 / JCM 21226 / LMG 7866 / NBRC 102419 / NCTC 12128 / CDC 0568-73)).